The primary structure comprises 238 residues: Cysteine-rich venom protein 1 (238 aa).

An N-terminal signal peptide occupies residues 1-19 (MIAFIVLLSLAAVLQQSSG). Residues 38-164 (VDKHNALRRS…STKYLYVCQY (127 aa)) enclose the SCP domain. Intrachain disulfides connect Cys-75–Cys-153, Cys-92–Cys-165, Cys-148–Cys-162, Cys-184–Cys-191, Cys-187–Cys-196, Cys-200–Cys-233, Cys-209–Cys-227, and Cys-218–Cys-231. The ShKT domain maps to 200–233 (CEYEDTFSNCKALAKKTKCKTEWIKSKCPATCFC).

It belongs to the CRISP family. As to expression, expressed by the venom gland.

It is found in the secreted. In terms of biological role, blocks contraction of smooth muscle elicited by high potassium-induced depolarization, but does not block caffeine-stimulated contraction. May target voltage-gated calcium channels on smooth muscle. The sequence is that of Cysteine-rich venom protein 1 from Hydrophis hardwickii (Hardwick's spine-bellied seasnake).